The chain runs to 220 residues: Ribosomal RNA small subunit methyltransferase G (220 aa).

Residues G78, F83, 129 to 130 (GE), and R146 contribute to the S-adenosyl-L-methionine site.

This sequence belongs to the methyltransferase superfamily. RNA methyltransferase RsmG family.

Its subcellular location is the cytoplasm. It carries out the reaction guanosine(527) in 16S rRNA + S-adenosyl-L-methionine = N(7)-methylguanosine(527) in 16S rRNA + S-adenosyl-L-homocysteine. Specifically methylates the N7 position of guanine in position 527 of 16S rRNA. The protein is Ribosomal RNA small subunit methyltransferase G of Geobacter metallireducens (strain ATCC 53774 / DSM 7210 / GS-15).